Here is a 421-residue protein sequence, read N- to C-terminus: Gamma-glutamyl phosphate reductase (421 aa).

It belongs to the gamma-glutamyl phosphate reductase family.

It is found in the cytoplasm. The enzyme catalyses L-glutamate 5-semialdehyde + phosphate + NADP(+) = L-glutamyl 5-phosphate + NADPH + H(+). It participates in amino-acid biosynthesis; L-proline biosynthesis; L-glutamate 5-semialdehyde from L-glutamate: step 2/2. In terms of biological role, catalyzes the NADPH-dependent reduction of L-glutamate 5-phosphate into L-glutamate 5-semialdehyde and phosphate. The product spontaneously undergoes cyclization to form 1-pyrroline-5-carboxylate. The protein is Gamma-glutamyl phosphate reductase of Pseudomonas savastanoi pv. phaseolicola (strain 1448A / Race 6) (Pseudomonas syringae pv. phaseolicola (strain 1448A / Race 6)).